The following is a 568-amino-acid chain: Proline--tRNA ligase (568 aa).

Belongs to the class-II aminoacyl-tRNA synthetase family. ProS type 1 subfamily. Homodimer.

The protein localises to the cytoplasm. The enzyme catalyses tRNA(Pro) + L-proline + ATP = L-prolyl-tRNA(Pro) + AMP + diphosphate. Catalyzes the attachment of proline to tRNA(Pro) in a two-step reaction: proline is first activated by ATP to form Pro-AMP and then transferred to the acceptor end of tRNA(Pro). As ProRS can inadvertently accommodate and process non-cognate amino acids such as alanine and cysteine, to avoid such errors it has two additional distinct editing activities against alanine. One activity is designated as 'pretransfer' editing and involves the tRNA(Pro)-independent hydrolysis of activated Ala-AMP. The other activity is designated 'posttransfer' editing and involves deacylation of mischarged Ala-tRNA(Pro). The misacylated Cys-tRNA(Pro) is not edited by ProRS. This Nitrosomonas eutropha (strain DSM 101675 / C91 / Nm57) protein is Proline--tRNA ligase.